The sequence spans 104 residues: Circadian clock oscillator protein KaiB (104 aa).

It belongs to the KaiB family. The KaiABC complex composition changes during the circadian cycle to control KaiC phosphorylation. Complexes KaiC(6), KaiA(2-4):KaiC(6), KaiB(6):KaiC(6) and KaiC(6):KaiB(6):KaiA(12) are among the most important forms, many form cooperatively. Undergoes a major conformational rearrangment; in the free state forms homotetramers as a dimer of dimers. When bound to the CI domain of KaiC switches to a monomeric thioredoxin-fold (KaiB(fs)). KaiB(fs) binds CikA, leading it to dephosphorylate phospho-RpaA.

Key component of the KaiABC oscillator complex, which constitutes the main circadian regulator in cyanobacteria. Complex composition changes during the circadian cycle to control KaiC phosphorylation. KaiA stimulates KaiC autophosphorylation, while KaiB sequesters KaiA, leading to KaiC autodephosphorylation. Phospho-Ser-431 KaiC accumulation triggers binding of KaiB to form the KaiB(6):KaiC(6) complex, leading to changes in output regulators CikA and SasA. KaiB switches to a thioredoxin-like fold (KaiB(fs)) when bound to KaiC. KaiB(6):KaiC(6) formation exposes a site for KaiA binding that sequesters KaiA from KaiC, making the KaiC(6):KaiB(6):KaiA(12) complex that results in KaiC autodephosphorylation. In terms of biological role, a metamorphic protein which reversibly switches between an inactive tetrameric fold and a rare, thioredoxin-like monomeric fold (KaiB(fs)). KaiB(fs) binds phospho-KaiC, KaiA and CikA. KaiA and CikA compete for binding to KaiB(fs), and KaiB(fs) and SasA compete for binding to KaiC, thus the clock oscillator and output signal pathway are tightly coupled. This is Circadian clock oscillator protein KaiB from Parasynechococcus marenigrum (strain WH8102).